The sequence spans 129 residues: Small ribosomal subunit protein uS11 (129 aa).

It belongs to the universal ribosomal protein uS11 family. As to quaternary structure, part of the 30S ribosomal subunit. Interacts with proteins S7 and S18. Binds to IF-3.

Functionally, located on the platform of the 30S subunit, it bridges several disparate RNA helices of the 16S rRNA. Forms part of the Shine-Dalgarno cleft in the 70S ribosome. In Azorhizobium caulinodans (strain ATCC 43989 / DSM 5975 / JCM 20966 / LMG 6465 / NBRC 14845 / NCIMB 13405 / ORS 571), this protein is Small ribosomal subunit protein uS11.